Here is a 144-residue protein sequence, read N- to C-terminus: Large ribosomal subunit protein uL16 (144 aa).

It belongs to the universal ribosomal protein uL16 family. As to quaternary structure, part of the 50S ribosomal subunit.

Binds 23S rRNA and is also seen to make contacts with the A and possibly P site tRNAs. This is Large ribosomal subunit protein uL16 from Erythrobacter litoralis (strain HTCC2594).